A 455-amino-acid polypeptide reads, in one-letter code: Epoxide hydrolase 1 (455 aa).

Residues 1-21 (MWLELVLASLLGFVIYWFVSR) form a helical; Signal-anchor for type III membrane protein membrane-spanning segment. At 22-455 (DKEETLPLGD…RKFVSLAELQ (434 aa)) the chain is on the cytoplasmic side. D226 serves as the catalytic Nucleophile. R295 is subject to Dimethylated arginine. Y374 (proton donor) is an active-site residue. H431 serves as the catalytic Proton acceptor. N6-acetyllysine is present on K439.

Belongs to the peptidase S33 family.

Its subcellular location is the microsome membrane. The protein localises to the endoplasmic reticulum membrane. The catalysed reaction is cis-stilbene oxide + H2O = (1R,2R)-hydrobenzoin. It catalyses the reaction 1-(4-methoxyphenyl)-N-methyl-N-[(3-methyloxetan-3-yl)methyl]methanamine + H2O = 2-{[(4-methoxybenzyl)(methyl)amino]methyl}-2-methylpropane-1,3-diol. The enzyme catalyses 8,9-epoxy-(5Z,11Z,14Z)-eicosatrienoate + H2O = 8,9-dihydroxy-(5Z,11Z,14Z)-eicosatrienoate. It carries out the reaction 11,12-epoxy-(5Z,8Z,14Z)-eicosatrienoate + H2O = 11,12-dihydroxy-(5Z,8Z,14Z)-eicosatrienoate. The catalysed reaction is 2-(5Z,8Z,11Z,14Z-eicosatetraenoyl)-glycerol + H2O = glycerol + (5Z,8Z,11Z,14Z)-eicosatetraenoate + H(+). Inhibited by 10-hydroxystearamide and methoxy-arachidonyl fluorophosphate. Its function is as follows. Biotransformation enzyme that catalyzes the hydrolysis of arene and aliphatic epoxides to less reactive and more water soluble dihydrodiols by the trans addition of water. May play a role in the metabolism of endogenous lipids such as epoxide-containing fatty acids. Metabolizes the abundant endocannabinoid 2-arachidonoylglycerol (2-AG) to free arachidonic acid (AA) and glycerol. Binds 20(S)-hydroxycholesterol (20(S)-OHC). The chain is Epoxide hydrolase 1 from Rattus norvegicus (Rat).